Here is a 406-residue protein sequence, read N- to C-terminus: MAALPRQGIIILTYVLAALELTCLFMQFSILPYLSRTLGLDSVSFGYLQTTFGVLQLLGGPVFGRFADQCGARAALSLSFLAASALYLLLVASCSPALPGVFLLFASRIPSALMHTLPAAQMVITDLTAPTERPAALGRLGLCFGIGIIFGSLLGGTLNTAYGIQCPAILAFVVTLLGAVLSFTCVPATTKEASVQSAPQGGTKASVFDLKAITRLLLLPRVLPVFLVKVISGLPSGLFLVMFSIISMDFFQLEAAQAGYLMSFFGILQMMIQGLVIGRLSTHFPEEALLRSSVLVFAVVGLGMALMSSVLHFCFLMPGLVFSLCTLNVVTDSMLTKAVSASDTGTMLGLSASVQPLTRTLGPTLGGLLYRSYGVPIFGHVQLMVNLLVLLVLWKKPLSQKGEKAR.

Transmembrane regions (helical) follow at residues 8 to 28 (GIII…FMQF), 43 to 63 (VSFG…GPVF), 85 to 105 (ALYL…FLLF), 140 to 160 (LGLC…TLNT), 168 to 188 (AILA…CVPA), 226 to 246 (FLVK…FSII), 258 to 278 (AGYL…LVIG), 295 to 315 (LVFA…HFCF), 316 to 336 (LMPG…SMLT), and 374 to 394 (GVPI…LVLW).

This sequence belongs to the major facilitator (TC 2.A.1) superfamily. Organic cation transporter (TC 2.A.1.19) family. As to quaternary structure, interacts with RNF167. Expressed at high levels in fetal and adult kidney and liver, and extraembryonic membranes (yolk sac). Expressed at moderate levels in intestine, heart, lung and testis.

It is found in the apical cell membrane. Its function is as follows. May act as a transporter of organic cations based on a proton efflux antiport mechanism. May play a role in the transport of chloroquine and quinidine-related compounds in kidney. Plays a role in the regulation of lipid metabolism. The polypeptide is Solute carrier family 22 member 18 (Slc67a1) (Mus musculus (Mouse)).